Here is a 268-residue protein sequence, read N- to C-terminus: Calpain small subunit 1 (268 aa).

Position 1 is an N-acetylmethionine (M1). The residue at position 6 (S6) is a Phosphoserine. In terms of domain architecture, EF-hand 1; atypical spans E91–N125. Ca(2+) contacts are provided by A109, D112, E114, E119, D137, D152, D154, T156, K158, and E163. EF-hand domains follow at residues F139–K172, N169–H204, L205–L233, and V234–S268. K179 bears the N6-acetyllysine mark. Positions 182, 184, 186, 188, 193, and 225 each coordinate Ca(2+).

As to quaternary structure, homodimer or heterodimer of a large (catalytic) and a small (regulatory) subunit. In presence of calcium, the heterodimer dissociates.

The protein resides in the cytoplasm. It is found in the cell membrane. Regulatory subunit of the calcium-regulated non-lysosomal thiol-protease which catalyzes limited proteolysis of substrates involved in cytoskeletal remodeling and signal transduction. Essential for embryonic development. This is Calpain small subunit 1 (CAPNS1) from Homo sapiens (Human).